Reading from the N-terminus, the 536-residue chain is Phosphoenolpyruvate carboxykinase (ATP) (536 aa).

3 residues coordinate substrate: arginine 61, tyrosine 195, and lysine 201. Residues lysine 201, histidine 220, and 236–244 (GLSGTGKTT) each bind ATP. Mn(2+)-binding residues include lysine 201 and histidine 220. Aspartate 257 contributes to the Mn(2+) binding site. Residues glutamate 285, arginine 322, and threonine 447 each coordinate ATP. Arginine 322 provides a ligand contact to substrate.

It belongs to the phosphoenolpyruvate carboxykinase (ATP) family. The cofactor is Mn(2+).

Its subcellular location is the cytoplasm. The enzyme catalyses oxaloacetate + ATP = phosphoenolpyruvate + ADP + CO2. The protein operates within carbohydrate biosynthesis; gluconeogenesis. In terms of biological role, involved in the gluconeogenesis. Catalyzes the conversion of oxaloacetate (OAA) to phosphoenolpyruvate (PEP) through direct phosphoryl transfer between the nucleoside triphosphate and OAA. In Brucella suis biovar 1 (strain 1330), this protein is Phosphoenolpyruvate carboxykinase (ATP).